A 259-amino-acid polypeptide reads, in one-letter code: 3-deoxy-manno-octulosonate cytidylyltransferase (259 aa).

The protein belongs to the KdsB family.

It localises to the cytoplasm. The catalysed reaction is 3-deoxy-alpha-D-manno-oct-2-ulosonate + CTP = CMP-3-deoxy-beta-D-manno-octulosonate + diphosphate. It participates in nucleotide-sugar biosynthesis; CMP-3-deoxy-D-manno-octulosonate biosynthesis; CMP-3-deoxy-D-manno-octulosonate from 3-deoxy-D-manno-octulosonate and CTP: step 1/1. It functions in the pathway bacterial outer membrane biogenesis; lipopolysaccharide biosynthesis. Its function is as follows. Activates KDO (a required 8-carbon sugar) for incorporation into bacterial lipopolysaccharide in Gram-negative bacteria. This chain is 3-deoxy-manno-octulosonate cytidylyltransferase, found in Xanthomonas axonopodis pv. citri (strain 306).